The following is a 215-amino-acid chain: LexA repressor (215 aa).

The H-T-H motif DNA-binding region spans 28-48 (RAEIAAELGFSSPNAAEEHLR). Catalysis depends on for autocatalytic cleavage activity residues serine 133 and lysine 170.

Belongs to the peptidase S24 family. Homodimer.

It catalyses the reaction Hydrolysis of Ala-|-Gly bond in repressor LexA.. Functionally, represses a number of genes involved in the response to DNA damage (SOS response), including recA and lexA. In the presence of single-stranded DNA, RecA interacts with LexA causing an autocatalytic cleavage which disrupts the DNA-binding part of LexA, leading to derepression of the SOS regulon and eventually DNA repair. This chain is LexA repressor, found in Burkholderia mallei (strain NCTC 10247).